Reading from the N-terminus, the 139-residue chain is Large-conductance mechanosensitive channel 1 (139 aa).

3 helical membrane passes run 8–28 (FISK…AAFG), 30–50 (IVDS…FGGL), and 81–101 (GSFI…FLMV).

Belongs to the MscL family. In terms of assembly, homopentamer.

It is found in the cell inner membrane. Functionally, channel that opens in response to stretch forces in the membrane lipid bilayer. May participate in the regulation of osmotic pressure changes within the cell. The polypeptide is Large-conductance mechanosensitive channel 1 (Mesorhizobium japonicum (strain LMG 29417 / CECT 9101 / MAFF 303099) (Mesorhizobium loti (strain MAFF 303099))).